A 39-amino-acid chain; its full sequence is Bomanin Short 3 (39 aa).

A signal peptide spans 1 to 18 (MKFLSLAFVLGLLALANA). A propeptide spanning residues 19–23 (TPLNP) is cleaved from the precursor. C32 and C35 are oxidised to a cystine.

Belongs to the bomanin family. Hemolymph (at protein level).

It localises to the secreted. Its function is as follows. Secreted immune-induced peptide induced by Toll signaling. Has a role in resistance bacterial and fungal infections. The strength of antimicrobial activity appears to correlate with the overall level of expression. Has no activity against the fungus C.glabrata in vitro. The sequence is that of Bomanin Short 3 from Drosophila melanogaster (Fruit fly).